Here is a 255-residue protein sequence, read N- to C-terminus: L-erythrulose-1-phosphate isomerase (255 aa).

His98 (electrophile) is an active-site residue. The active-site Proton acceptor is the Glu171. Substrate is bound by residues Gly177 and Ser214.

It belongs to the triosephosphate isomerase family. In terms of assembly, homodimer.

Its subcellular location is the cytoplasm. It catalyses the reaction L-erythrulose 1-phosphate = D-erythrulose 4-phosphate. It functions in the pathway carbohydrate metabolism; erythritol degradation. Catalyzes the isomerization of D-erythrulose-4P to L-erythrulose-1P. This Rhizobium meliloti (strain 1021) (Ensifer meliloti) protein is L-erythrulose-1-phosphate isomerase.